The chain runs to 135 residues: uncharacterized protein (135 aa).

A helical transmembrane segment spans residues 35 to 55 (VVLVLIGATIILVVISVLVVS).

The protein resides in the membrane. This is an uncharacterized protein from Saccharomyces cerevisiae (strain ATCC 204508 / S288c) (Baker's yeast).